Here is a 343-residue protein sequence, read N- to C-terminus: RNA 3'-terminal phosphate cyclase (343 aa).

ATP contacts are provided by residues Gln102 and Phe284–Gln288. His308 functions as the Tele-AMP-histidine intermediate in the catalytic mechanism.

The protein belongs to the RNA 3'-terminal cyclase family. Type 1 subfamily.

It localises to the cytoplasm. It catalyses the reaction a 3'-end 3'-phospho-ribonucleotide-RNA + ATP = a 3'-end 2',3'-cyclophospho-ribonucleotide-RNA + AMP + diphosphate. Its function is as follows. Catalyzes the conversion of 3'-phosphate to a 2',3'-cyclic phosphodiester at the end of RNA. The mechanism of action of the enzyme occurs in 3 steps: (A) adenylation of the enzyme by ATP; (B) transfer of adenylate to an RNA-N3'P to produce RNA-N3'PP5'A; (C) and attack of the adjacent 2'-hydroxyl on the 3'-phosphorus in the diester linkage to produce the cyclic end product. The biological role of this enzyme is unknown but it is likely to function in some aspects of cellular RNA processing. This Thermococcus kodakarensis (strain ATCC BAA-918 / JCM 12380 / KOD1) (Pyrococcus kodakaraensis (strain KOD1)) protein is RNA 3'-terminal phosphate cyclase (rtcA).